Here is a 447-residue protein sequence, read N- to C-terminus: Teichoic acids export ATP-binding protein TagH (447 aa).

Residues 24–246 (DKLKTLFSVF…YRAFLHRYNH (223 aa)) form the ABC transporter domain. 60–67 (GLNGSGKS) is a binding site for ATP. Residues 247 to 447 (FTEPQKESYQ…QVLKLKEVTE (201 aa)) are unknown. Residues 359–393 (NAVKTTKTKPASTKESRQQEEVQPSPTNVPENNNS) form a disordered region. 2 stretches are compositionally biased toward polar residues: residues 360 to 369 (AVKTTKTKPA) and 379 to 393 (EVQPSPTNVPENNNS). Positions 398 to 442 (STYTVEVGDSVSLIAENHGLTIEQLQTLNPEIIEVPIYPGQVLKL) constitute a LysM domain.

Belongs to the ABC transporter superfamily. Teichoic acids exporter (TC 3.A.1.104.1) family. The complex is composed of two ATP-binding proteins (TagH) and two transmembrane proteins (TagG).

Its subcellular location is the cell membrane. It catalyses the reaction ATP + H2O + teichoic acidSide 1 = ADP + phosphate + teichoic acidSide 2.. In terms of biological role, part of the ABC transporter complex TagGH involved in teichoic acids export. Responsible for energy coupling to the transport system. The polypeptide is Teichoic acids export ATP-binding protein TagH (Enterococcus faecalis (strain ATCC 700802 / V583)).